The sequence spans 712 residues: uncharacterized protein (712 aa).

Disordered stretches follow at residues 1 to 46, 107 to 264, and 370 to 389; these read MAKI…NNLN, NIKP…IPQA, and QPQH…QQNQ. 3 stretches are compositionally biased toward low complexity: residues 10–46, 107–143, and 161–173; these read INNS…NNLN, NIKP…SNSS, and TFDN…NSSN. A compositionally biased stretch (polar residues) spans 178-187; the sequence is ISPTTSPQLE. Low complexity-rich tracts occupy residues 188 to 198 and 241 to 264; these read QHQQYQQQQHQ and PLQQ…IPQA.

This is an uncharacterized protein from Dictyostelium discoideum (Social amoeba).